A 399-amino-acid chain; its full sequence is Telomeric repeat-binding factor 2-interacting protein 1 (399 aa).

Position 2 is an N-acetylalanine (A2). S36 and S43 each carry phosphoserine. The 24-residue stretch at 78-101 folds into the BRCT domain; that stretch reads FISTQYILDCVERNERLELEAYRL. The tract at residues 104–132 is disordered; sequence ASAADTGSEAKPGALAEGAAEPEPQRHAG. A compositionally biased stretch (low complexity) spans 112-125; that stretch reads EAKPGALAEGAAEP. A Glycyl lysine isopeptide (Lys-Gly) (interchain with G-Cter in SUMO2) cross-link involves residue K114. Residues 128–188 enclose the Myb-like domain; sequence QRHAGRIAFT…SLKDRYLKHL (61 aa). A phosphoserine mark is found at S154 and S156. K194 is covalently cross-linked (Glycyl lysine isopeptide (Lys-Gly) (interchain with G-Cter in SUMO2)). 2 disordered regions span residues 196–244 and 264–311; these read LLGD…EEIQ and VVVD…QPEV. A phosphoserine mark is found at S203 and S206. Glycyl lysine isopeptide (Lys-Gly) (interchain with G-Cter in SUMO2) cross-links involve residues K208, K212, and K240. The span at 280-304 shows a compositional bias: acidic residues; it reads CDDDPPTPEEDSETQPDEEEEEEEE. K372 is covalently cross-linked (Glycyl lysine isopeptide (Lys-Gly) (interchain with G-Cter in SUMO2)). A Nuclear localization signal motif is present at residues 383–399; the sequence is KKFGAQNVARRIEFRKK.

It belongs to the RAP1 family. In terms of assembly, associates with the I-kappa-B-kinase (IKK) core complex, composed of CHUK, IKBKB and IKBKG. Homodimer. Component of the shelterin complex (telosome) composed of TERF1, TERF2, TINF2, TERF2IP ACD and POT1. Interacts with TERF2; the interaction is direct. Does not interact with TERF1. Interacts with SLX4/BTBD12. Ubiquitous. Highly expressed.

It localises to the nucleus. The protein resides in the cytoplasm. It is found in the chromosome. Its subcellular location is the telomere. Acts both as a regulator of telomere function and as a transcription regulator. Involved in the regulation of telomere length and protection as a component of the shelterin complex (telosome). In contrast to other components of the shelterin complex, it is dispensible for telomere capping and does not participate in the protection of telomeres against non-homologous end-joining (NHEJ)-mediated repair. Instead, it is required to negatively regulate telomere recombination and is essential for repressing homology-directed repair (HDR), which can affect telomere length. Does not bind DNA directly: recruited to telomeric double-stranded 5'-TTAGGG-3' repeats via its interaction with TERF2. Independently of its function in telomeres, also acts as a transcription regulator: recruited to extratelomeric 5'-TTAGGG-3' sites via its association with TERF2 or other factors, and regulates gene expression. When cytoplasmic, associates with the I-kappa-B-kinase (IKK) complex and acts as a regulator of the NF-kappa-B signaling by promoting IKK-mediated phosphorylation of RELA/p65, leading to activate expression of NF-kappa-B target genes. The protein is Telomeric repeat-binding factor 2-interacting protein 1 (TERF2IP) of Homo sapiens (Human).